The following is a 185-amino-acid chain: GTP-dependent dephospho-CoA kinase (185 aa).

Positions 50, 52, 73, 75, and 128 each coordinate GTP.

It belongs to the GTP-dependent DPCK family.

The catalysed reaction is 3'-dephospho-CoA + GTP = GDP + CoA + H(+). It participates in cofactor biosynthesis; coenzyme A biosynthesis. Catalyzes the GTP-dependent phosphorylation of the 3'-hydroxyl group of dephosphocoenzyme A to form coenzyme A (CoA). In Aeropyrum pernix (strain ATCC 700893 / DSM 11879 / JCM 9820 / NBRC 100138 / K1), this protein is GTP-dependent dephospho-CoA kinase.